A 342-amino-acid chain; its full sequence is Holliday junction branch migration complex subunit RuvB (342 aa).

Residues Met1 to Tyr181 form a large ATPase domain (RuvB-L) region. Residues Leu20, Arg21, Gly62, Lys65, Thr66, Thr67, Glu128 to Phe130, Arg171, Tyr181, and Arg218 contribute to the ATP site. Thr66 lines the Mg(2+) pocket. Residues Thr182–Gly252 are small ATPAse domain (RuvB-S). Residues Ala255–Asp342 form a head domain (RuvB-H) region. 2 residues coordinate DNA: Arg310 and Arg315.

It belongs to the RuvB family. In terms of assembly, homohexamer. Forms an RuvA(8)-RuvB(12)-Holliday junction (HJ) complex. HJ DNA is sandwiched between 2 RuvA tetramers; dsDNA enters through RuvA and exits via RuvB. An RuvB hexamer assembles on each DNA strand where it exits the tetramer. Each RuvB hexamer is contacted by two RuvA subunits (via domain III) on 2 adjacent RuvB subunits; this complex drives branch migration. In the full resolvosome a probable DNA-RuvA(4)-RuvB(12)-RuvC(2) complex forms which resolves the HJ.

It is found in the cytoplasm. The catalysed reaction is ATP + H2O = ADP + phosphate + H(+). Its function is as follows. The RuvA-RuvB-RuvC complex processes Holliday junction (HJ) DNA during genetic recombination and DNA repair, while the RuvA-RuvB complex plays an important role in the rescue of blocked DNA replication forks via replication fork reversal (RFR). RuvA specifically binds to HJ cruciform DNA, conferring on it an open structure. The RuvB hexamer acts as an ATP-dependent pump, pulling dsDNA into and through the RuvAB complex. RuvB forms 2 homohexamers on either side of HJ DNA bound by 1 or 2 RuvA tetramers; 4 subunits per hexamer contact DNA at a time. Coordinated motions by a converter formed by DNA-disengaged RuvB subunits stimulates ATP hydrolysis and nucleotide exchange. Immobilization of the converter enables RuvB to convert the ATP-contained energy into a lever motion, pulling 2 nucleotides of DNA out of the RuvA tetramer per ATP hydrolyzed, thus driving DNA branch migration. The RuvB motors rotate together with the DNA substrate, which together with the progressing nucleotide cycle form the mechanistic basis for DNA recombination by continuous HJ branch migration. Branch migration allows RuvC to scan DNA until it finds its consensus sequence, where it cleaves and resolves cruciform DNA. The chain is Holliday junction branch migration complex subunit RuvB from Kosmotoga olearia (strain ATCC BAA-1733 / DSM 21960 / TBF 19.5.1).